Consider the following 357-residue polypeptide: DNA integrity scanning protein DisA (357 aa).

In terms of domain architecture, DAC spans 8–146 (VKSIINILQL…GNLRYTLKDI (139 aa)). ATP contacts are provided by residues glycine 75, leucine 93, and 106–110 (MRHRT).

The protein belongs to the DisA family. In terms of assembly, homooctamer. Mg(2+) is required as a cofactor.

The catalysed reaction is 2 ATP = 3',3'-c-di-AMP + 2 diphosphate. Functionally, participates in a DNA-damage check-point that is active prior to asymmetric division when DNA is damaged. DisA forms globular foci that rapidly scan along the chromosomes during sporulation, searching for lesions. When a lesion is present, DisA pauses at the lesion site. This triggers a cellular response that culminates in a temporary block in sporulation initiation. Its function is as follows. Also has diadenylate cyclase activity, catalyzing the condensation of 2 ATP molecules into cyclic di-AMP (c-di-AMP). c-di-AMP acts as a signaling molecule that couples DNA integrity with progression of sporulation. The rise in c-di-AMP level generated by DisA while scanning the chromosome, operates as a positive signal that advances sporulation; upon encountering a lesion, the DisA focus arrests at the damaged site and halts c-di-AMP synthesis. The polypeptide is DNA integrity scanning protein DisA (Bacillus cereus (strain B4264)).